A 416-amino-acid chain; its full sequence is Glutamyl-tRNA reductase (416 aa).

Substrate contacts are provided by residues 49–52 (TCNR), S105, 110–112 (EPQ), and Q116. C50 acts as the Nucleophile in catalysis. 185-190 (GAGETI) provides a ligand contact to NADP(+).

This sequence belongs to the glutamyl-tRNA reductase family. In terms of assembly, homodimer.

The catalysed reaction is (S)-4-amino-5-oxopentanoate + tRNA(Glu) + NADP(+) = L-glutamyl-tRNA(Glu) + NADPH + H(+). The protein operates within porphyrin-containing compound metabolism; protoporphyrin-IX biosynthesis; 5-aminolevulinate from L-glutamyl-tRNA(Glu): step 1/2. In terms of biological role, catalyzes the NADPH-dependent reduction of glutamyl-tRNA(Glu) to glutamate 1-semialdehyde (GSA). The polypeptide is Glutamyl-tRNA reductase (Shewanella piezotolerans (strain WP3 / JCM 13877)).